The chain runs to 660 residues: MSARLRVEELRAELQRRGLDASGNKPVLVRRLDAAIRKEEEEEAAVSAAAKEEADAGGVVDGEGNGEDKRKRKRRGDGEDVDNSESDAAKLEGMSYRELQALAKSRGLAANGSKKEVIERLLCAPSDTDGGVQDKKKIAKGFADGDDRVEECRKEKIVTATRKGAAVLDQHIPDHIKMTYHVLQVWFLLKGDEIYDATMNQTNVGDNNNKFYIIQALESDAGGSFMVYNRWGRVGARGQDKLHGPFSSREQAIYEFEGKFHGKTNNHWSDRKSFECYARKYTWLEMDYGEADRETNKKVSPSTDQIKETKLETRIASFISLICNISMMKQQMVEIGYNSDKLPLGKLSKSTIFKGYDVLKRISNVISRADRRQLEQLTGEFYTVIPHDFGFKKMREFIIDTPQKLKAKLEMVEALGEIEIATKLLEDDSTDQDDPLYARYKQLSCDFTPLEVGSEEYSMIKTYLANTHGKTHTSYTVDVVQIFKVSRHGEMERFQKFATAGNRMLLWHGSRLTNWAGILSQGLRIAPPEAPVTGYMFGKGVYFADMFSKSANYCYASEACRSGVLLLCEVALGEMNELLNADYDANNLPKGKLSTKGVGQTEPNTAESKITDDGVVVPLGKPKAEPSKRGSLLYNEFIVYNVDQIRMRYVLHVSFNFKKR.

Residues 2 to 36 enclose the SAP 1 domain; sequence SARLRVEELRAELQRRGLDASGNKPVLVRRLDAAI. Residues 40–92 form a disordered region; that stretch reads EEEEAAVSAAAKEEADAGGVVDGEGNGEDKRKRKRRGDGEDVDNSESDAAKLE. The Nuclear localization signal motif lies at 69-75; it reads KRKRKRR. In terms of domain architecture, SAP 2 spans 91 to 125; it reads LEGMSYRELQALAKSRGLAANGSKKEVIERLLCAP. The region spanning 179–281 is the WGR domain; the sequence is TYHVLQVWFL…KSFECYARKY (103 aa). The PARP alpha-helical domain maps to 308-426; the sequence is ETKLETRIAS…EIEIATKLLE (119 aa). The region spanning 434-660 is the PARP catalytic domain; that stretch reads DPLYARYKQL…LHVSFNFKKR (227 aa).

It belongs to the ARTD/PARP family.

It localises to the nucleus. The catalysed reaction is NAD(+) + (ADP-D-ribosyl)n-acceptor = nicotinamide + (ADP-D-ribosyl)n+1-acceptor + H(+).. It carries out the reaction L-aspartyl-[protein] + NAD(+) = 4-O-(ADP-D-ribosyl)-L-aspartyl-[protein] + nicotinamide. The enzyme catalyses L-glutamyl-[protein] + NAD(+) = 5-O-(ADP-D-ribosyl)-L-glutamyl-[protein] + nicotinamide. In terms of biological role, involved in the base excision repair (BER) pathway, by catalyzing the poly(ADP-ribosyl)ation of a limited number of acceptor proteins involved in chromatin architecture and in DNA metabolism. This modification follows DNA damages and appears as an obligatory step in a detection/signaling pathway leading to the reparation of DNA strand breaks. In Oryza sativa subsp. japonica (Rice), this protein is Poly [ADP-ribose] polymerase 2-A (PARP2-A).